Here is a 646-residue protein sequence, read N- to C-terminus: Wee1-like protein kinase (646 aa).

Positions 1 to 181 are disordered; the sequence is MSFLSRQQPP…GTPPHKTFRK (181 aa). A compositionally biased stretch (acidic residues) spans 32 to 43; the sequence is DCEEEEEEEEEE. Serine 53 is subject to Phosphoserine; by PLK1. Residues serine 78 and serine 85 each carry the phosphoserine modification. Residues 94-103 are compositionally biased toward low complexity; that stretch reads LLPGACPGAD. Phosphoserine; by CDK1 is present on serine 123. Phosphoserine is present on residues serine 127, serine 137, serine 139, serine 150, and serine 165. The segment covering 158 to 170 has biased composition (basic and acidic residues); it reads RAGEGRRSPRPDH. Residues threonine 187, threonine 190, and threonine 239 each carry the phosphothreonine modification. 3 positions are modified to phosphoserine: serine 270, serine 307, and serine 312. Positions 299–569 constitute a Protein kinase domain; sequence FHELEKIGSG…AMALVKHSVL (271 aa). ATP contacts are provided by residues 305-313 and lysine 328; that span reads IGSGEFGSV. Asparagine 342 contacts Mg(2+). Aspartate 426 acts as the Proton acceptor in catalysis. The Mg(2+) site is built by asparagine 431, aspartate 463, and glycine 465. Serine 642 bears the Phosphoserine; by BRSK1 and BRSK2 mark.

It belongs to the protein kinase superfamily. Ser/Thr protein kinase family. WEE1 subfamily. Requires Mg(2+) as cofactor. Post-translationally, phosphorylated during M and G1 phases. Also autophosphorylated. Phosphorylation at Ser-642 by BRSK1 and BRSK2 in post-mitotic neurons, leads to down-regulate WEE1 activity in polarized neurons. Phosphorylated at Ser-53 and Ser-123 by PLK1 and CDK1, respectively, generating an signal for degradation that can be recognized by the SCF(BTRC) complex, leading to its ubiquitination and degradation at the onset of G2/M phase. In terms of processing, dephosphorylated at Thr-239 by CTDP1. Dephosphorylated at Ser-53 and Ser-123 by the serine/threonine-protein phosphatase 2A preventing its ubiquitin-mediated degradation. Ubiquitinated and degraded at the onset of G2/M phase.

Its subcellular location is the nucleus. It catalyses the reaction L-tyrosyl-[protein] + ATP = O-phospho-L-tyrosyl-[protein] + ADP + H(+). Its activity is regulated as follows. Synthesis is increased during S and G2 phases, presumably by an increase in transcription; activity is decreased by phosphorylation during M phase. Protein levels fall in M phase as a result of decreased synthesis combined with degradation. Activity seems to be negatively regulated by phosphorylation upon entry into mitosis, although N-terminal phosphorylation might also regulate the protein stability via protection from proteolysis or might regulate the subcellular location. Functionally, acts as a negative regulator of entry into mitosis (G2 to M transition) by protecting the nucleus from cytoplasmically activated cyclin B1-complexed CDK1 before the onset of mitosis by mediating phosphorylation of CDK1 on 'Tyr-15'. Specifically phosphorylates and inactivates cyclin B1-complexed CDK1 reaching a maximum during G2 phase and a minimum as cells enter M phase. Phosphorylation of cyclin B1-CDK1 occurs exclusively on 'Tyr-15' and phosphorylation of monomeric CDK1 does not occur. Its activity increases during S and G2 phases and decreases at M phase when it is hyperphosphorylated. A correlated decrease in protein level occurs at M/G1 phase, probably due to its degradation. The chain is Wee1-like protein kinase from Homo sapiens (Human).